Consider the following 268-residue polypeptide: Tropinone reductase homolog At2g29150 (268 aa).

22–46 (LVTGGSKGLGEAVVEELAMLGARVH) lines the NADP(+) pocket. Residue serine 155 participates in substrate binding. The active-site Proton acceptor is the tyrosine 167.

This sequence belongs to the short-chain dehydrogenases/reductases (SDR) family. SDR65C subfamily.

Enantiospecific reductase active on cyclic monoterpenes and small flexible lipophilic carbonyls. No activity with tropinone, nitrogen-containing tropinone analogs, tropine or pseudotropine as substrate. The protein is Tropinone reductase homolog At2g29150 of Arabidopsis thaliana (Mouse-ear cress).